Reading from the N-terminus, the 452-residue chain is Pup--protein ligase (452 aa).

E9 is a Mg(2+) binding site. R53 contributes to the ATP binding site. Mg(2+) is bound at residue Y55. D57 acts as the Proton acceptor in catalysis. Position 63 (E63) interacts with Mg(2+). T66 and W419 together coordinate ATP.

It belongs to the Pup ligase/Pup deamidase family. Pup-conjugating enzyme subfamily.

It carries out the reaction ATP + [prokaryotic ubiquitin-like protein]-L-glutamate + [protein]-L-lysine = ADP + phosphate + N(6)-([prokaryotic ubiquitin-like protein]-gamma-L-glutamyl)-[protein]-L-lysine.. It functions in the pathway protein degradation; proteasomal Pup-dependent pathway. The protein operates within protein modification; protein pupylation. Functionally, catalyzes the covalent attachment of the prokaryotic ubiquitin-like protein modifier Pup to the proteasomal substrate proteins, thereby targeting them for proteasomal degradation. This tagging system is termed pupylation. The ligation reaction involves the side-chain carboxylate of the C-terminal glutamate of Pup and the side-chain amino group of a substrate lysine. The polypeptide is Pup--protein ligase (Gordonia bronchialis (strain ATCC 25592 / DSM 43247 / BCRC 13721 / JCM 3198 / KCTC 3076 / NBRC 16047 / NCTC 10667) (Rhodococcus bronchialis)).